Consider the following 232-residue polypeptide: Large ribosomal subunit protein uL1 (232 aa).

Belongs to the universal ribosomal protein uL1 family. Part of the 50S ribosomal subunit.

Its function is as follows. Binds directly to 23S rRNA. The L1 stalk is quite mobile in the ribosome, and is involved in E site tRNA release. In terms of biological role, protein L1 is also a translational repressor protein, it controls the translation of the L11 operon by binding to its mRNA. This is Large ribosomal subunit protein uL1 from Aromatoleum aromaticum (strain DSM 19018 / LMG 30748 / EbN1) (Azoarcus sp. (strain EbN1)).